We begin with the raw amino-acid sequence, 502 residues long: Betaine aldehyde dehydrogenase, chloroplastic (502 aa).

The transit peptide at 1–7 (MAFPIPA) directs the protein to the chloroplast. Residue 240–245 (GSSATG) participates in NAD(+) binding. Glu-262 serves as the catalytic Proton acceptor. Residue Cys-296 is the Nucleophile of the active site.

This sequence belongs to the aldehyde dehydrogenase family. As to quaternary structure, homodimer.

It is found in the plastid. The protein localises to the chloroplast. It carries out the reaction betaine aldehyde + NAD(+) + H2O = glycine betaine + NADH + 2 H(+). The protein operates within amine and polyamine biosynthesis; betaine biosynthesis via choline pathway; betaine from betaine aldehyde: step 1/1. The protein is Betaine aldehyde dehydrogenase, chloroplastic of Atriplex hortensis (Mountain spinach).